An 83-amino-acid chain; its full sequence is Mitotic-spindle organizing protein 1 (83 aa).

This sequence belongs to the MOZART1 family. As to quaternary structure, part of the gamma-tubulin complex.

Its subcellular location is the cytoplasm. The protein resides in the cytoskeleton. It localises to the microtubule organizing center. It is found in the spindle pole body. In terms of biological role, required for gamma-tubulin complex recruitment to the microtubule organizing center (MTOC). In Botryotinia fuckeliana (strain B05.10) (Noble rot fungus), this protein is Mitotic-spindle organizing protein 1.